The following is a 277-amino-acid chain: Mannosyl-3-phosphoglycerate phosphatase (277 aa).

Catalysis depends on aspartate 13, which acts as the Nucleophile. Residues aspartate 13, aspartate 15, and aspartate 219 each contribute to the Mg(2+) site.

This sequence belongs to the HAD-like hydrolase superfamily. MPGP family. The cofactor is Mg(2+).

It is found in the cytoplasm. The catalysed reaction is 2-O-(alpha-D-mannosyl)-3-phosphoglycerate + H2O = (2R)-2-O-(alpha-D-mannosyl)-glycerate + phosphate. The protein operates within carbohydrate biosynthesis; 2-(alpha-D-mannosyl)-D-glycerate biosynthesis; 2-(alpha-D-mannosyl)-D-glycerate from GDP-alpha-D-mannose (MPG route): step 2/2. Functionally, hydrolyzes mannosyl-3-phosphoglycerate (MPG) to form the osmolyte mannosylglycerate (MG). This is Mannosyl-3-phosphoglycerate phosphatase from Aeropyrum pernix (strain ATCC 700893 / DSM 11879 / JCM 9820 / NBRC 100138 / K1).